The following is a 391-amino-acid chain: Alkanesulfonate monooxygenase (391 aa).

It belongs to the SsuD family.

It carries out the reaction an alkanesulfonate + FMNH2 + O2 = an aldehyde + FMN + sulfite + H2O + 2 H(+). Functionally, catalyzes the desulfonation of aliphatic sulfonates. This is Alkanesulfonate monooxygenase from Rhodopseudomonas palustris (strain TIE-1).